The chain runs to 512 residues: Mesoderm induction early response protein 1 (512 aa).

Over residues 1-16 (MAEPSVESSSPGGSAT) the composition is skewed to low complexity. Disordered regions lie at residues 1–63 (MAEP…REGD) and 75–173 (YGST…EDYI). Phosphoserine is present on Ser10. The span at 17–36 (SDDHEFDPSADMLVHDFDDE) shows a compositional bias: basic and acidic residues. Acidic residues-rich tracts occupy residues 37-46 (RTLEEEEMME) and 83-105 (EEDE…DNDD). A compositionally biased stretch (polar residues) spans 129–144 (QSSNDDPSQSVASQDA). Residue Ser141 is modified to Phosphoserine. Tyr155 carries the post-translational modification Phosphotyrosine. Phosphoserine occurs at positions 160 and 166. Over residues 160–173 (SEVEEESEEDEDYI) the composition is skewed to acidic residues. The region spanning 180–278 (KEIMVGSMFQ…EALRRLRFNV (99 aa)) is the ELM2 domain. The interval 180-284 (KEIMVGSMFQ…RFNVKAAREE (105 aa)) is interaction with HDAC1. Lys239 is covalently cross-linked (Glycyl lysine isopeptide (Lys-Gly) (interchain with G-Cter in SUMO2)). Positions 283-335 (EELSVWTEEECRNFEQGLKAYGKDFHLIQANKVRTRSVGECVAFYYMWKKSER) constitute an SANT domain. Positions 366-512 (ESESAASSRA…KFEELENTDD (147 aa)) are disordered. 3 positions are modified to phosphoserine: Ser367, Ser369, and Ser377. The span at 396–409 (TVSTTNQNGVSSNG) shows a compositional bias: polar residues. The segment covering 414-423 (LNKEEVKVEG) has biased composition (basic and acidic residues). A Glycyl lysine isopeptide (Lys-Gly) (interchain with G-Cter in SUMO2) cross-link involves residue Lys420. At Thr448 the chain carries Phosphothreonine. Residues 462–475 (ARNENDFDEKSERP) show a composition bias toward basic and acidic residues. Positions 482–494 (NSNGKESPGSSEF) are enriched in polar residues. A phosphoserine mark is found at Ser483, Ser488, and Ser491.

In terms of assembly, interacts with HDAC1. Part of a complex containing at least CDYL, MIER1, MIER2, HDAC1 and HDAC2.

Its subcellular location is the nucleus. Transcriptional repressor regulating the expression of a number of genes including SP1 target genes. Probably functions through recruitment of HDAC1 a histone deacetylase involved in chromatin silencing. In Pongo abelii (Sumatran orangutan), this protein is Mesoderm induction early response protein 1 (MIER1).